The primary structure comprises 336 residues: MDFDAVLLLSFGGPEGPEQVRPFLENVTRGRGVPPERLDHVAEHYLHFGGVSPINGINRALIEQLRAAQDLPVYFGNRNWEPYVEDTVKVMRDNGIRRAAVFTTSAWSGYSSCTQYVEDIARARTAAGTGAPELVKLRPYFDHPLFVEMFAGAIADAAAKVPAGARLVFTAHSVPVAADERLGPRLYSRQVAYAARLVAAAAGYAEHDLVWQSRSGPPQVRWLEPDVADHLRALAESGTRAVIVCPIGFVADHIEVVWDLDEELRAQAESAGMLMARASTPNAQPRFARLAADLIDELRCGRTPARVTGPDPVPGCLASVNGAPCRPPHCAAQATG.

Fe-coproporphyrin III is bound by residues serine 52 and tyrosine 116. Residues histidine 172 and glutamate 255 each contribute to the Fe(2+) site.

This sequence belongs to the ferrochelatase family.

Its subcellular location is the cytoplasm. It catalyses the reaction Fe-coproporphyrin III + 2 H(+) = coproporphyrin III + Fe(2+). It functions in the pathway porphyrin-containing compound metabolism; protoheme biosynthesis. Involved in coproporphyrin-dependent heme b biosynthesis. Catalyzes the insertion of ferrous iron into coproporphyrin III to form Fe-coproporphyrin III. The polypeptide is Coproporphyrin III ferrochelatase (Mycolicibacterium paratuberculosis (strain ATCC BAA-968 / K-10) (Mycobacterium paratuberculosis)).